A 201-amino-acid polypeptide reads, in one-letter code: Small ribosomal subunit protein eS1 (201 aa).

This sequence belongs to the eukaryotic ribosomal protein eS1 family.

This is Small ribosomal subunit protein eS1 from Methanoregula boonei (strain DSM 21154 / JCM 14090 / 6A8).